We begin with the raw amino-acid sequence, 227 residues long: 2-C-methyl-D-erythritol 4-phosphate cytidylyltransferase (227 aa).

It belongs to the IspD/TarI cytidylyltransferase family. IspD subfamily.

The enzyme catalyses 2-C-methyl-D-erythritol 4-phosphate + CTP + H(+) = 4-CDP-2-C-methyl-D-erythritol + diphosphate. The protein operates within isoprenoid biosynthesis; isopentenyl diphosphate biosynthesis via DXP pathway; isopentenyl diphosphate from 1-deoxy-D-xylulose 5-phosphate: step 2/6. In terms of biological role, catalyzes the formation of 4-diphosphocytidyl-2-C-methyl-D-erythritol from CTP and 2-C-methyl-D-erythritol 4-phosphate (MEP). This is 2-C-methyl-D-erythritol 4-phosphate cytidylyltransferase from Dehalococcoides mccartyi (strain CBDB1).